A 317-amino-acid chain; its full sequence is Acetyl-coenzyme A carboxylase carboxyl transferase subunit alpha (317 aa).

Residues 39 to 293 (RLESKAAAAL…GDALAEALTG (255 aa)) form the CoA carboxyltransferase C-terminal domain.

Belongs to the AccA family. Acetyl-CoA carboxylase is a heterohexamer composed of biotin carboxyl carrier protein (AccB), biotin carboxylase (AccC) and two subunits each of ACCase subunit alpha (AccA) and ACCase subunit beta (AccD).

The protein resides in the cytoplasm. The enzyme catalyses N(6)-carboxybiotinyl-L-lysyl-[protein] + acetyl-CoA = N(6)-biotinyl-L-lysyl-[protein] + malonyl-CoA. It functions in the pathway lipid metabolism; malonyl-CoA biosynthesis; malonyl-CoA from acetyl-CoA: step 1/1. Component of the acetyl coenzyme A carboxylase (ACC) complex. First, biotin carboxylase catalyzes the carboxylation of biotin on its carrier protein (BCCP) and then the CO(2) group is transferred by the carboxyltransferase to acetyl-CoA to form malonyl-CoA. This is Acetyl-coenzyme A carboxylase carboxyl transferase subunit alpha from Methylobacterium nodulans (strain LMG 21967 / CNCM I-2342 / ORS 2060).